The chain runs to 246 residues: MTNDTQRPSGRQANQLRDVRITRHYTKHAEGSVLVEFGDTKVICTASIAESVPSFLRDRGQGWLTAEYGMLPRATHTRSDREAARGKQTGRTQEIQRLIGRALRSVFDLEKLGARTLHIDCDVIQADGGTRTASITGAFVAAHDAVAKLLATGRIESSPITDYVAAISVGVYDGLPVLDLDYDEDSQCDTDMNVVMTGAGGFVEIQGTAEGVAFSRDEMNALLDLASDGINTLIAKQKAALEQKSE.

Phosphate-binding positions include arginine 91 and 129-131 (GTR).

It belongs to the RNase PH family. As to quaternary structure, homohexameric ring arranged as a trimer of dimers.

The enzyme catalyses tRNA(n+1) + phosphate = tRNA(n) + a ribonucleoside 5'-diphosphate. Its function is as follows. Phosphorolytic 3'-5' exoribonuclease that plays an important role in tRNA 3'-end maturation. Removes nucleotide residues following the 3'-CCA terminus of tRNAs; can also add nucleotides to the ends of RNA molecules by using nucleoside diphosphates as substrates, but this may not be physiologically important. Probably plays a role in initiation of 16S rRNA degradation (leading to ribosome degradation) during starvation. The polypeptide is Ribonuclease PH (Paraburkholderia phytofirmans (strain DSM 17436 / LMG 22146 / PsJN) (Burkholderia phytofirmans)).